The following is a 191-amino-acid chain: Cell division protein SepF (191 aa).

Residues 157–178 (YLNESPAQPVQTTTSFGRTATP) show a composition bias toward polar residues. The interval 157 to 191 (YLNESPAQPVQTTTSFGRTATPTPAWGTDSRYAAQ) is disordered.

Belongs to the SepF family. Homodimer. Interacts with FtsZ.

It localises to the cytoplasm. Its function is as follows. Cell division protein that is part of the divisome complex and is recruited early to the Z-ring. Probably stimulates Z-ring formation, perhaps through the cross-linking of FtsZ protofilaments. Its function overlaps with FtsA. This is Cell division protein SepF from Synechococcus elongatus (strain ATCC 33912 / PCC 7942 / FACHB-805) (Anacystis nidulans R2).